The following is a 339-amino-acid chain: Fructose-1,6-bisphosphatase class 1 (339 aa).

Mg(2+)-binding residues include glutamate 92, aspartate 114, leucine 116, and aspartate 117. Residues 117 to 120 (DGSS), asparagine 213, and lysine 279 each bind substrate. Glutamate 285 provides a ligand contact to Mg(2+).

It belongs to the FBPase class 1 family. Homotetramer. The cofactor is Mg(2+).

The protein localises to the cytoplasm. It carries out the reaction beta-D-fructose 1,6-bisphosphate + H2O = beta-D-fructose 6-phosphate + phosphate. The protein operates within carbohydrate biosynthesis; gluconeogenesis. The protein is Fructose-1,6-bisphosphatase class 1 of Acidovorax sp. (strain JS42).